The chain runs to 150 residues: Putative pre-16S rRNA nuclease (150 aa).

This sequence belongs to the YqgF nuclease family.

The protein localises to the cytoplasm. Its function is as follows. Could be a nuclease involved in processing of the 5'-end of pre-16S rRNA. The chain is Putative pre-16S rRNA nuclease from Chlamydia abortus (strain DSM 27085 / S26/3) (Chlamydophila abortus).